Reading from the N-terminus, the 265-residue chain is Undecaprenyl-diphosphatase (265 aa).

8 helical membrane passes run 14–34, 40–60, 79–99, 112–132, 141–161, 182–202, 217–237, and 242–262; these read GLGE…PWLF, SLVF…VYFW, GKLF…GYLF, LLIA…DSIA, MNVF…FPGI, AKFS…VSLL, IGFF…LGIV, and FKIF…FYLL.

This sequence belongs to the UppP family.

The protein localises to the cell membrane. The catalysed reaction is di-trans,octa-cis-undecaprenyl diphosphate + H2O = di-trans,octa-cis-undecaprenyl phosphate + phosphate + H(+). Catalyzes the dephosphorylation of undecaprenyl diphosphate (UPP). Confers resistance to bacitracin. This is Undecaprenyl-diphosphatase from Caldicellulosiruptor bescii (strain ATCC BAA-1888 / DSM 6725 / KCTC 15123 / Z-1320) (Anaerocellum thermophilum).